A 266-amino-acid polypeptide reads, in one-letter code: Na(+)-translocating NADH-quinone reductase subunit C (266 aa).

Residues 16-36 form a helical membrane-spanning segment; it reads LLVVVILCLVCSVVVAGAAVG. T232 carries the post-translational modification FMN phosphoryl threonine.

The protein belongs to the NqrC family. As to quaternary structure, composed of six subunits; NqrA, NqrB, NqrC, NqrD, NqrE and NqrF. Requires FMN as cofactor.

The protein localises to the cell inner membrane. It carries out the reaction a ubiquinone + n Na(+)(in) + NADH + H(+) = a ubiquinol + n Na(+)(out) + NAD(+). In terms of biological role, NQR complex catalyzes the reduction of ubiquinone-1 to ubiquinol by two successive reactions, coupled with the transport of Na(+) ions from the cytoplasm to the periplasm. NqrA to NqrE are probably involved in the second step, the conversion of ubisemiquinone to ubiquinol. In Yersinia pestis, this protein is Na(+)-translocating NADH-quinone reductase subunit C.